A 138-amino-acid chain; its full sequence is Thyrotropin subunit beta (138 aa).

The N-terminal stretch at 1–20 (MTAIFLMSMLFGLACGQAMS) is a signal peptide. 6 disulfide bridges follow: Cys-22–Cys-72, Cys-36–Cys-87, Cys-39–Cys-125, Cys-47–Cys-103, Cys-51–Cys-105, and Cys-108–Cys-115. N-linked (GlcNAc...) asparagine glycosylation occurs at Asn-43. Positions 133–138 (VLEFSI) are excised as a propeptide.

It belongs to the glycoprotein hormones subunit beta family. As to quaternary structure, heterodimer of a common alpha chain and a unique beta chain which confers biological specificity to thyrotropin, lutropin, follitropin and gonadotropin.

The protein localises to the secreted. In terms of biological role, indispensable for the control of thyroid structure and metabolism. This Sus scrofa (Pig) protein is Thyrotropin subunit beta (TSHB).